A 188-amino-acid polypeptide reads, in one-letter code: Putative manganese efflux pump MntP (188 aa).

Helical transmembrane passes span 3-23, 41-61, 62-82, 107-129, 143-163, and 168-188; these read LSAT…ASIG, LIFG…GMLA, SQFV…FLGG, LLVT…LAFL, ATFL…PLLG, and ILGG…HFAG.

This sequence belongs to the MntP (TC 9.B.29) family.

It is found in the cell inner membrane. Probably functions as a manganese efflux pump. This Klebsiella pneumoniae (strain 342) protein is Putative manganese efflux pump MntP.